The sequence spans 275 residues: NAD kinase (275 aa).

Aspartate 66 serves as the catalytic Proton acceptor. NAD(+)-binding positions include aspartate 66–glycine 67, histidine 71, asparagine 135–glutamate 136, lysine 146, arginine 163, aspartate 165, and threonine 176–serine 181.

Belongs to the NAD kinase family. A divalent metal cation serves as cofactor.

It is found in the cytoplasm. The enzyme catalyses NAD(+) + ATP = ADP + NADP(+) + H(+). Involved in the regulation of the intracellular balance of NAD and NADP, and is a key enzyme in the biosynthesis of NADP. Catalyzes specifically the phosphorylation on 2'-hydroxyl of the adenosine moiety of NAD to yield NADP. The chain is NAD kinase from Methanosphaera stadtmanae (strain ATCC 43021 / DSM 3091 / JCM 11832 / MCB-3).